A 1144-amino-acid chain; its full sequence is Guanine nucleotide-binding protein G(s) subunit alpha isoforms XLas (1144 aa).

Disordered regions lie at residues 1-186 (MGML…LAPG), 316-558 (DDDT…PAAG), 622-657 (SASA…SAWP), and 735-772 (RSRS…DKKR). Residues 31 to 46 (LEAQGAAAPGAGVGPA) are compositionally biased toward low complexity. Residues 343-356 (KSEHAKRPPLERQA) are compositionally biased toward basic and acidic residues. Polar residues predominate over residues 358 to 369 (ETGNSPISSTTA). A compositionally biased stretch (basic and acidic residues) spans 370 to 381 (EEAKVPSLERGE). Low complexity-rich tracts occupy residues 467–499 (PAAA…AAEA) and 518–558 (EPAA…PAAG). The span at 644–654 (PPTPRPAPRPS) shows a compositional bias: pro residues. Positions 743–767 (KAKDPMEERRKQMRKEAMEMREQKR) are enriched in basic and acidic residues. The stretch at 745 to 772 (KDPMEERRKQMRKEAMEMREQKRADKKR) forms a coiled coil. In terms of domain architecture, G-alpha spans 789–1144 (CTHRLLLLGA…RMHLRQYELL (356 aa)). Positions 792–805 (RLLLLGAGESGKST) are G1 motif. A GTP-binding site is contributed by 797–805 (GAGESGKST). Residue S804 coordinates Mg(2+). Residues 818–840 (FNGEGGEEDPQAARSNSDGEKAT) are disordered. A coiled-coil region spans residues 837–863 (EKATKVQDIKNNLKEAIETIVAAMSNL). The interval 946–954 (DLPRCRVLT) is G2 motif. Residues 947–954 (LPRCRVLT), 973–977 (DVGGQ), and 1042–1045 (NKQD) contribute to the GTP site. At R951 the chain carries ADP-ribosylarginine; by cholera toxin. Residue T954 participates in Mg(2+) binding. The G3 motif stretch occupies residues 969–978 (FHMFDVGGQR). Residues 1038–1045 (ILFLNKQD) are G4 motif. At S1102 the chain carries Phosphoserine. The tract at residues 1114–1119 (TCAVDT) is G5 motif. A1116 provides a ligand contact to GTP.

Belongs to the G-alpha family. G(s) subfamily. As to quaternary structure, g proteins are composed of 3 units; alpha, beta and gamma. The alpha chain contains the guanine nucleotide binding site. Interacts through its N-terminal region with ALEX which is produced from the same locus in a different open reading frame. This interaction may inhibit its adenylyl cyclase-stimulating activity. Interacts with MAGED2. Enriched in neuroendocrine tissues with a particularly high level of expression in pituitary where it is abundant in intermediate and anterior lobes. In adrenal gland, found in central region containing medullary chromaffin cells but not in cortex. In cerebellum, strongly expressed in perikarya of Purkinje cells. Not detected in liver, kidney or neurohypophysis.

The protein resides in the cell membrane. It is found in the apical cell membrane. Guanine nucleotide-binding proteins (G proteins) function as transducers in numerous signaling pathways controlled by G protein-coupled receptors (GPCRs). Signaling involves the activation of adenylyl cyclases, resulting in increased levels of the signaling molecule cAMP. GNAS functions downstream of several GPCRs, including beta-adrenergic receptors. XLas isoforms interact with the same set of receptors as Gnas isoforms. In Rattus norvegicus (Rat), this protein is Guanine nucleotide-binding protein G(s) subunit alpha isoforms XLas.